The chain runs to 210 residues: Cytochrome c biogenesis ATP-binding export protein CcmA (210 aa).

Positions 3 to 205 constitute an ABC transporter domain; the sequence is LHLQAAGLAC…KPSGYRELNL (203 aa). An ATP-binding site is contributed by 37-44; sequence GPNGSGKT.

Belongs to the ABC transporter superfamily. CcmA exporter (TC 3.A.1.107) family. As to quaternary structure, the complex is composed of two ATP-binding proteins (CcmA) and two transmembrane proteins (CcmB).

It is found in the cell inner membrane. It catalyses the reaction heme b(in) + ATP + H2O = heme b(out) + ADP + phosphate + H(+). Its function is as follows. Part of the ABC transporter complex CcmAB involved in the biogenesis of c-type cytochromes; once thought to export heme, this seems not to be the case, but its exact role is uncertain. Responsible for energy coupling to the transport system. This Pseudomonas putida (strain GB-1) protein is Cytochrome c biogenesis ATP-binding export protein CcmA.